We begin with the raw amino-acid sequence, 220 residues long: Deoxyribose-phosphate aldolase (220 aa).

Catalysis depends on Asp-89, which acts as the Proton donor/acceptor. Lys-151 (schiff-base intermediate with acetaldehyde) is an active-site residue. The active-site Proton donor/acceptor is the Lys-180.

This sequence belongs to the DeoC/FbaB aldolase family. DeoC type 1 subfamily.

The protein localises to the cytoplasm. The enzyme catalyses 2-deoxy-D-ribose 5-phosphate = D-glyceraldehyde 3-phosphate + acetaldehyde. The protein operates within carbohydrate degradation; 2-deoxy-D-ribose 1-phosphate degradation; D-glyceraldehyde 3-phosphate and acetaldehyde from 2-deoxy-alpha-D-ribose 1-phosphate: step 2/2. Functionally, catalyzes a reversible aldol reaction between acetaldehyde and D-glyceraldehyde 3-phosphate to generate 2-deoxy-D-ribose 5-phosphate. The sequence is that of Deoxyribose-phosphate aldolase from Streptococcus pneumoniae serotype 19F (strain G54).